The sequence spans 233 residues: Mediator of RNA polymerase II transcription subunit 7 (233 aa).

Lys185 participates in a covalent cross-link: Glycyl lysine isopeptide (Lys-Gly) (interchain with G-Cter in SUMO1); alternate. Lys185 is covalently cross-linked (Glycyl lysine isopeptide (Lys-Gly) (interchain with G-Cter in SUMO2); alternate). A disordered region spans residues 185 to 213 (KTEPMDTDDSNNCIGQNEQQRENSGHRRD). At Ser194 the chain carries Phosphoserine. The segment covering 203-213 (QQRENSGHRRD) has biased composition (basic and acidic residues).

This sequence belongs to the Mediator complex subunit 7 family. As to quaternary structure, component of the Mediator complex, which is composed of MED1, MED4, MED6, MED7, MED8, MED9, MED10, MED11, MED12, MED13, MED13L, MED14, MED15, MED16, MED17, MED18, MED19, MED20, MED21, MED22, MED23, MED24, MED25, MED26, MED27, MED29, MED30, MED31, CCNC, CDK8 and CDC2L6/CDK11. The MED12, MED13, CCNC and CDK8 subunits form a distinct module termed the CDK8 module. Mediator containing the CDK8 module is less active than Mediator lacking this module in supporting transcriptional activation. Individual preparations of the Mediator complex lacking one or more distinct subunits have been variously termed ARC, CRSP, DRIP, PC2, SMCC and TRAP.

The protein resides in the nucleus. In terms of biological role, component of the Mediator complex, a coactivator involved in the regulated transcription of nearly all RNA polymerase II-dependent genes. Mediator functions as a bridge to convey information from gene-specific regulatory proteins to the basal RNA polymerase II transcription machinery. Mediator is recruited to promoters by direct interactions with regulatory proteins and serves as a scaffold for the assembly of a functional preinitiation complex with RNA polymerase II and the general transcription factors. In Bos taurus (Bovine), this protein is Mediator of RNA polymerase II transcription subunit 7 (MED7).